The primary structure comprises 525 residues: 2-isopropylmalate synthase (525 aa).

The Pyruvate carboxyltransferase domain maps to 5 to 267; it reads VIIFDTTLRD…HTGIHHQEIY (263 aa). Mn(2+) is bound by residues Asp14, His202, His204, and Asn238. Residues 392–525 are regulatory domain; it reads RLEYFSVQSS…NNSQDMQETV (134 aa).

Belongs to the alpha-IPM synthase/homocitrate synthase family. LeuA type 1 subfamily. Homodimer. It depends on Mn(2+) as a cofactor.

It localises to the cytoplasm. The catalysed reaction is 3-methyl-2-oxobutanoate + acetyl-CoA + H2O = (2S)-2-isopropylmalate + CoA + H(+). It functions in the pathway amino-acid biosynthesis; L-leucine biosynthesis; L-leucine from 3-methyl-2-oxobutanoate: step 1/4. Catalyzes the condensation of the acetyl group of acetyl-CoA with 3-methyl-2-oxobutanoate (2-ketoisovalerate) to form 3-carboxy-3-hydroxy-4-methylpentanoate (2-isopropylmalate). In Sodalis glossinidius (strain morsitans), this protein is 2-isopropylmalate synthase.